We begin with the raw amino-acid sequence, 316 residues long: 4-hydroxy-3-methylbut-2-enyl diphosphate reductase (316 aa).

Cys-12 is a binding site for [4Fe-4S] cluster. Residues His-41 and His-74 each contribute to the (2E)-4-hydroxy-3-methylbut-2-enyl diphosphate site. Dimethylallyl diphosphate contacts are provided by His-41 and His-74. Residues His-41 and His-74 each coordinate isopentenyl diphosphate. Cys-96 serves as a coordination point for [4Fe-4S] cluster. His-124 contacts (2E)-4-hydroxy-3-methylbut-2-enyl diphosphate. His-124 lines the dimethylallyl diphosphate pocket. His-124 provides a ligand contact to isopentenyl diphosphate. Residue Glu-126 is the Proton donor of the active site. Position 168 (Thr-168) interacts with (2E)-4-hydroxy-3-methylbut-2-enyl diphosphate. [4Fe-4S] cluster is bound at residue Cys-198. (2E)-4-hydroxy-3-methylbut-2-enyl diphosphate-binding residues include Ser-226, Ser-227, Asn-228, and Ser-270. Residues Ser-226, Ser-227, Asn-228, and Ser-270 each coordinate dimethylallyl diphosphate. Isopentenyl diphosphate-binding residues include Ser-226, Ser-227, Asn-228, and Ser-270.

The protein belongs to the IspH family. [4Fe-4S] cluster serves as cofactor.

It catalyses the reaction isopentenyl diphosphate + 2 oxidized [2Fe-2S]-[ferredoxin] + H2O = (2E)-4-hydroxy-3-methylbut-2-enyl diphosphate + 2 reduced [2Fe-2S]-[ferredoxin] + 2 H(+). The catalysed reaction is dimethylallyl diphosphate + 2 oxidized [2Fe-2S]-[ferredoxin] + H2O = (2E)-4-hydroxy-3-methylbut-2-enyl diphosphate + 2 reduced [2Fe-2S]-[ferredoxin] + 2 H(+). It functions in the pathway isoprenoid biosynthesis; dimethylallyl diphosphate biosynthesis; dimethylallyl diphosphate from (2E)-4-hydroxy-3-methylbutenyl diphosphate: step 1/1. The protein operates within isoprenoid biosynthesis; isopentenyl diphosphate biosynthesis via DXP pathway; isopentenyl diphosphate from 1-deoxy-D-xylulose 5-phosphate: step 6/6. Its function is as follows. Catalyzes the conversion of 1-hydroxy-2-methyl-2-(E)-butenyl 4-diphosphate (HMBPP) into a mixture of isopentenyl diphosphate (IPP) and dimethylallyl diphosphate (DMAPP). Acts in the terminal step of the DOXP/MEP pathway for isoprenoid precursor biosynthesis. The polypeptide is 4-hydroxy-3-methylbut-2-enyl diphosphate reductase (Marinobacter nauticus (strain ATCC 700491 / DSM 11845 / VT8) (Marinobacter aquaeolei)).